The primary structure comprises 101 residues: NADH-quinone oxidoreductase subunit K (101 aa).

3 helical membrane passes run Leu4–Leu24, Ile30–Phe50, and Phe62–Val82.

The protein belongs to the complex I subunit 4L family. As to quaternary structure, NDH-1 is composed of 14 different subunits. Subunits NuoA, H, J, K, L, M, N constitute the membrane sector of the complex.

The protein localises to the cell inner membrane. The enzyme catalyses a quinone + NADH + 5 H(+)(in) = a quinol + NAD(+) + 4 H(+)(out). In terms of biological role, NDH-1 shuttles electrons from NADH, via FMN and iron-sulfur (Fe-S) centers, to quinones in the respiratory chain. The immediate electron acceptor for the enzyme in this species is believed to be ubiquinone. Couples the redox reaction to proton translocation (for every two electrons transferred, four hydrogen ions are translocated across the cytoplasmic membrane), and thus conserves the redox energy in a proton gradient. The sequence is that of NADH-quinone oxidoreductase subunit K from Stenotrophomonas maltophilia (strain K279a).